Consider the following 424-residue polypeptide: Histidine--tRNA ligase (424 aa).

It belongs to the class-II aminoacyl-tRNA synthetase family. As to quaternary structure, homodimer.

The protein resides in the cytoplasm. It catalyses the reaction tRNA(His) + L-histidine + ATP = L-histidyl-tRNA(His) + AMP + diphosphate + H(+). This is Histidine--tRNA ligase from Escherichia coli O17:K52:H18 (strain UMN026 / ExPEC).